Consider the following 744-residue polypeptide: Dolasta-1(15),8-diene synthase (744 aa).

A terpene cyclase region spans residues 1-344 (MASTMMNYQD…RRYNPAAPLP (344 aa)). Positions 108 and 112 each coordinate Mg(2+). Residues Asp108, Asp112, 198 to 201 (RHYD), 246 to 250 (SWDKE), and 336 to 337 (RY) each bind substrate. Positions 108–112 (DDLTD) match the DDXXD motif. A prenyltransferase region spans residues 345–744 (RREDIGKVNG…LHLITFQLKV (400 aa)). Positions 399–422 (YTTMTPAETSSDDKKKKAKASHET) are disordered. Over residues 409 to 422 (SDDKKKKAKASHET) the composition is skewed to basic and acidic residues. Isopentenyl diphosphate is bound by residues Arg459 and His488. The Mg(2+) site is built by Asp495 and Asp499. Residues 495-499 (DDVQD) carry the DDXXD motif. Residue Arg504 participates in dimethylallyl diphosphate binding. Residue Arg505 coordinates isopentenyl diphosphate. Positions 581, 582, and 617 each coordinate dimethylallyl diphosphate.

It in the N-terminal section; belongs to the terpene synthase family. This sequence in the C-terminal section; belongs to the FPP/GGPP synthase family. As to quaternary structure, hexamer. Mg(2+) serves as cofactor.

It catalyses the reaction isopentenyl diphosphate + (2E,6E)-farnesyl diphosphate = (2E,6E,10E)-geranylgeranyl diphosphate + diphosphate. The catalysed reaction is (2E,6E,10E)-geranylgeranyl diphosphate = (5R,12R,14S)-dolasta-1(15),8-diene + diphosphate. It carries out the reaction (2E,6E,10E)-geranylgeranyl diphosphate = delta-araneosene + diphosphate. In terms of biological role, bifunctional terpene synthase involved in the biosynthesis of the diterpenes delta-araneosene and dolasta-1(15),8-diene. The C-terminal prenyltransferase domain of CgDS catalyzes formation of the universal precursor of diterpene, geranylgeranyl diphosphate (GGPP), whereas the N-terminal terpene cyclase domain catalyzes the cyclization of GGPP to the intermediate delta-araneosene that is further converted to dolasta-1(15),8-diene in a second cyclization event. In some cases the cyclization stops at the delta-araneosene stage. The sequence is that of Dolasta-1(15),8-diene synthase from Colletotrichum gloeosporioides (Anthracnose fungus).